We begin with the raw amino-acid sequence, 498 residues long: ADP,ATP carrier protein 1 (498 aa).

The Cytoplasmic portion of the chain corresponds to 1–33 (MSTSKSENYLSELRKIIWPIEQYENKKFLPLAF). Residues 34–54 (MMFCILLNYSTLRSIKDGFVV) form a helical membrane-spanning segment. An intrachain disulfide couples Cys-37 to Cys-85. Residues 55–67 (TDIGTESISFLKT) are Extracellular-facing. The helical transmembrane segment at 68 to 88 (YIVLPSAVIAMIIYVKLCDIL) threads the bilayer. Topologically, residues 89–92 (KQEN) are cytoplasmic. The chain crosses the membrane as a helical span at residues 93-113 (VFYVITSFFLGYFALFAFVLY). Over 114–147 (PYPDLVHPDHKTIESLSLAYPNFKWFIKIVGKWS) the chain is Extracellular. A helical transmembrane segment spans residues 148–168 (FASFYTIAELWGTMMLSLLFW). The Cytoplasmic portion of the chain corresponds to 169–184 (QFANQITKIAEAKRFY). Residues 185–205 (SMFGLLANLALPVTSVVIGYF) traverse the membrane as a helical segment. The Extracellular segment spans residues 206–218 (LHEKTQIVAEHLK). The helical transmembrane segment at 219-239 (FVPLFVIMITSSFLIILTYRW) threads the bilayer. Residues 240 to 279 (MNKNVLTDPRLYDPALVKEKKTKAKLSFIESLKMIFTSKY) lie on the Cytoplasmic side of the membrane. The chain crosses the membrane as a helical span at residues 280–300 (VGYIALLIIAYGVSVNLVEGV). At 301–320 (WKSKVKELYPTKEAYTIYMG) the chain is on the extracellular side. A helical membrane pass occupies residues 321-341 (QFQFYQGWVAIAFMLIGSNIL). The Cytoplasmic portion of the chain corresponds to 342 to 348 (RKVSWLT). A helical transmembrane segment spans residues 349–369 (AAMITPLMMFITGAAFFSFIF). At 370–379 (FDSVIAMNLT) the chain is on the extracellular side. The helical transmembrane segment at 380 to 400 (GILASSPLTLAVMIGMIQNVL) threads the bilayer. Residues 401-438 (SKGVKYSLFDATKNMAYIPLDKDLRVKGQAAVEVIGGR) lie on the Cytoplasmic side of the membrane. 436-442 (GGRLGKS) serves as a coordination point for ATP. The chain crosses the membrane as a helical span at residues 439–459 (LGKSGGAIIQSTFFILFPVFG). Residues 460–465 (FIEATP) lie on the Extracellular side of the membrane. A helical membrane pass occupies residues 466-486 (YFASIFFIIVILWIFAVKGLN). Residues 487–498 (KEYQVLVNKNEK) are Cytoplasmic-facing.

It belongs to the ADP/ATP translocase tlc family.

The protein resides in the cell membrane. Its function is as follows. Provides the rickettsial cell with host ATP in exchange for rickettsial ADP. This is an obligate exchange system. This energy acquiring activity is an important component of rickettsial parasitism. In Rickettsia prowazekii (strain Madrid E), this protein is ADP,ATP carrier protein 1 (tlcA).